The following is a 496-amino-acid chain: Glutelin type-A 3 (496 aa).

The N-terminal stretch at 1-24 (MATIKFPIVFSVVCLFLLCNGSLA) is a signal peptide. Cystine bridges form between C45/C78 and C121/C312. Cupin type-1 domains follow at residues 50-248 (LQAF…GVAR) and 318-467 (QNID…EEAR).

The protein belongs to the 11S seed storage protein (globulins) family. Hexamer; each subunit is composed of an acidic and a basic chain derived from a single precursor and linked by a disulfide bond.

Functionally, seed storage protein. The polypeptide is Glutelin type-A 3 (GLUA3) (Oryza sativa subsp. japonica (Rice)).